Reading from the N-terminus, the 291-residue chain is Probable peptide ABC transporter permease protein y4tQ (291 aa).

The next 5 helical transmembrane spans lie at 28–48 (LVLLGGGILLLLILLALAAPL), 92–112 (LIVGLLSAVCAAVCGLLIGVI), 137–157 (LLAIALLSLTGPGIGILIVAI), 213–233 (ATVCASAIMTEAGLSFIGVGV), and 249–269 (LFLAIAPLTIFAPGLCLAVTV). Residues 88–276 (ARISLIVGLL…VTVLAVNLLG (189 aa)) enclose the ABC transmembrane type-1 domain.

This sequence belongs to the binding-protein-dependent transport system permease family. OppBC subfamily.

It is found in the cell inner membrane. Functionally, probably part of the binding-protein-dependent transport system y4tOPQRS for a peptide. Probably responsible for the translocation of the substrate across the membrane. The sequence is that of Probable peptide ABC transporter permease protein y4tQ from Sinorhizobium fredii (strain NBRC 101917 / NGR234).